Consider the following 368-residue polypeptide: MNAKIKVLLVDDSAVVRQVLQQVLERDKNIEVIGAAADPIFAQLRMSKQWPDVIVLDVEMPRMDGITFLKKLMAERPTPVVMCSTLTSKGAQTSMKALAAGAVAVVAKPAVGVKEYLESAAGELIMEIKAAAKANMRNMPAATASAQSMALPAKFSADAVIPLRTGGVIAGANKIAALGTSTGGTQALEYVLTRLPRNCPGIVIVQHMPEKFTAAFAERLNSICELEILEAESGHQVAPGRALIAPGGKHMLLRRSGAQYFVEIMSGPPVNRHRPSVDVLFRSVAQAAGRNALGVIMTGMGDDGAKGLLEMRNAGALTIGQDERSCIVYGMPKEAAKIGAVTREISLERIPQCVLDMGASLTASAQRG.

Positions 6-123 constitute a Response regulatory domain; it reads KVLLVDDSAV…KEYLESAAGE (118 aa). The residue at position 57 (Asp-57) is a 4-aspartylphosphate. The CheB-type methylesterase domain occupies 169–355; it reads IAGANKIAAL…SLERIPQCVL (187 aa). Residues Ser-181, His-207, and Asp-303 contribute to the active site.

Belongs to the CheB family. In terms of processing, phosphorylated by CheA. Phosphorylation of the N-terminal regulatory domain activates the methylesterase activity.

Its subcellular location is the cytoplasm. The enzyme catalyses [protein]-L-glutamate 5-O-methyl ester + H2O = L-glutamyl-[protein] + methanol + H(+). It carries out the reaction L-glutaminyl-[protein] + H2O = L-glutamyl-[protein] + NH4(+). In terms of biological role, involved in chemotaxis. Part of a chemotaxis signal transduction system that modulates chemotaxis in response to various stimuli. Catalyzes the demethylation of specific methylglutamate residues introduced into the chemoreceptors (methyl-accepting chemotaxis proteins or MCP) by CheR. Also mediates the irreversible deamidation of specific glutamine residues to glutamic acid. In Hahella chejuensis (strain KCTC 2396), this protein is Protein-glutamate methylesterase/protein-glutamine glutaminase 2.